Reading from the N-terminus, the 254-residue chain is Protein N-terminal and lysine N-methyltransferase EFM7 (254 aa).

Residues Trp57, 84 to 86, Asp106, Trp138, and Ser165 each bind S-adenosyl-L-methionine; that span reads GAA.

Belongs to the class I-like SAM-binding methyltransferase superfamily. EFM7 family.

It is found in the cytoplasm. Functionally, S-adenosyl-L-methionine-dependent protein methyltransferase that trimethylates the N-terminal glycine 'Gly-2' of elongation factor 1-alpha, before also catalyzing the mono- and dimethylation of 'Lys-3'. This Debaryomyces hansenii (strain ATCC 36239 / CBS 767 / BCRC 21394 / JCM 1990 / NBRC 0083 / IGC 2968) (Yeast) protein is Protein N-terminal and lysine N-methyltransferase EFM7.